We begin with the raw amino-acid sequence, 397 residues long: Elongation factor Tu (397 aa).

The tr-type G domain occupies 10 to 207; that stretch reads KPHVNIGTIG…VLDEYVKEPV (198 aa). Positions 19–26 are G1; sequence GHIDHGKT. 19–26 provides a ligand contact to GTP; the sequence is GHIDHGKT. T26 contacts Mg(2+). The segment at 60–64 is G2; sequence GITIS. The G3 stretch occupies residues 81–84; that stretch reads DCPG. GTP-binding positions include 81 to 85 and 136 to 139; these read DCPGH and NKCD. The interval 136-139 is G4; sequence NKCD. Residues 174 to 176 are G5; it reads SAL.

This sequence belongs to the TRAFAC class translation factor GTPase superfamily. Classic translation factor GTPase family. EF-Tu/EF-1A subfamily. As to quaternary structure, monomer.

The protein localises to the cytoplasm. The enzyme catalyses GTP + H2O = GDP + phosphate + H(+). Its function is as follows. GTP hydrolase that promotes the GTP-dependent binding of aminoacyl-tRNA to the A-site of ribosomes during protein biosynthesis. The protein is Elongation factor Tu of Desulforapulum autotrophicum (strain ATCC 43914 / DSM 3382 / VKM B-1955 / HRM2) (Desulfobacterium autotrophicum).